The following is a 314-amino-acid chain: Regulator of microtubule dynamics protein 1 (314 aa).

K165 carries the post-translational modification N6-succinyllysine. TPR repeat units follow at residues 168–204 (AICL…NPKD) and 222–258 (PWYQ…DPNF).

It belongs to the RMDN family. In terms of assembly, interacts with microtubules.

The protein localises to the cytoplasm. The protein resides in the cytoskeleton. It localises to the spindle. Its subcellular location is the spindle pole. The protein is Regulator of microtubule dynamics protein 1 (RMDN1) of Pongo abelii (Sumatran orangutan).